A 70-amino-acid chain; its full sequence is SPbeta prophage-derived uncharacterized protein YorZ (70 aa).

The chain is SPbeta prophage-derived uncharacterized protein YorZ (yorZ) from Bacillus subtilis (strain 168).